We begin with the raw amino-acid sequence, 800 residues long: Putative antiporter subunit mnhA2 (800 aa).

Transmembrane regions (helical) follow at residues 1-21 (MSLV…LLTS), 33-53 (IALT…PSVI), 78-98 (GLSL…FFYA), 118-138 (LFMF…MYVF), 167-187 (FMIT…LYIM), 207-227 (ALFI…SAQF), 241-261 (TPVS…FLLL), 273-293 (YIYI…ITAL), 300-320 (GILA…VGIG), 331-351 (IASI…NHAI), 387-407 (LVMM…GFLS), 424-444 (FSLI…IFTF), 472-492 (PWLF…IFFV), 527-547 (GFNI…VLAI), 595-615 (IIMT…RIGL), 627-647 (GPLE…LIFI), 651-671 (LTMV…FIAM), 676-696 (LALT…VSFS), 712-732 (IIKI…IFIA), and 768-788 (LDTL…YTLL).

Belongs to the CPA3 antiporters (TC 2.A.63) subunit A family. As to quaternary structure, may form a heterooligomeric complex that consists of seven subunits: mnhA2, mnhB2, mnhC2, mnhD2, mnhE2, mnhF2 and mnhG2.

The protein localises to the cell membrane. This is Putative antiporter subunit mnhA2 (mnhA2) from Staphylococcus aureus (strain MRSA252).